The sequence spans 230 residues: Uracil-DNA glycosylase (230 aa).

Residue D65 is the Proton acceptor of the active site.

Belongs to the uracil-DNA glycosylase (UDG) superfamily. UNG family.

The protein resides in the cytoplasm. It catalyses the reaction Hydrolyzes single-stranded DNA or mismatched double-stranded DNA and polynucleotides, releasing free uracil.. Functionally, excises uracil residues from the DNA which can arise as a result of misincorporation of dUMP residues by DNA polymerase or due to deamination of cytosine. This is Uracil-DNA glycosylase from Lactiplantibacillus plantarum (strain ATCC BAA-793 / NCIMB 8826 / WCFS1) (Lactobacillus plantarum).